Reading from the N-terminus, the 78-residue chain is D-alanyl carrier protein (78 aa).

The Carrier domain maps to 1–77 (MDLKEQIVEI…KVVAKVESLI (77 aa)). The residue at position 35 (Ser35) is an O-(pantetheine 4'-phosphoryl)serine.

The protein belongs to the DltC family. 4'-phosphopantetheine is transferred from CoA to a specific serine of apo-DCP.

The protein localises to the cytoplasm. It participates in cell wall biogenesis; lipoteichoic acid biosynthesis. Functionally, carrier protein involved in the D-alanylation of lipoteichoic acid (LTA). The loading of thioester-linked D-alanine onto DltC is catalyzed by D-alanine--D-alanyl carrier protein ligase DltA. The DltC-carried D-alanyl group is further transferred to cell membrane phosphatidylglycerol (PG) by forming an ester bond, probably catalyzed by DltD. D-alanylation of LTA plays an important role in modulating the properties of the cell wall in Gram-positive bacteria, influencing the net charge of the cell wall. The sequence is that of D-alanyl carrier protein from Leuconostoc mesenteroides subsp. mesenteroides (strain ATCC 8293 / DSM 20343 / BCRC 11652 / CCM 1803 / JCM 6124 / NCDO 523 / NBRC 100496 / NCIMB 8023 / NCTC 12954 / NRRL B-1118 / 37Y).